A 444-amino-acid chain; its full sequence is Sensor protein CiaH (444 aa).

Transmembrane regions (helical) follow at residues 21–41 (FGVF…VMHS) and 183–203 (LIVV…LYLA). Residues 223–438 (NASHELRTPL…IFEVKIAIQT (216 aa)) enclose the Histidine kinase domain. His226 carries the phosphohistidine; by autocatalysis modification.

Its subcellular location is the cell membrane. It carries out the reaction ATP + protein L-histidine = ADP + protein N-phospho-L-histidine.. In terms of biological role, member of the two-component regulatory system CiaH/CiaR. Involved in early steps of competence regulation and in penicillin susceptibility. Probably phosphorylates CiaR. The sequence is that of Sensor protein CiaH (ciaH) from Streptococcus pneumoniae serotype 4 (strain ATCC BAA-334 / TIGR4).